The following is a 361-amino-acid chain: Porphobilinogen deaminase (361 aa).

Position 2 is an N-acetylserine (Ser-2). Ser-69 is modified (phosphoserine). The residue at position 74 (Lys-74) is an N6-acetyllysine. At Ser-147 the chain carries Phosphoserine. S-(dipyrrolylmethanemethyl)cysteine is present on Cys-261.

Belongs to the HMBS family. Monomer. Dipyrromethane serves as cofactor.

The protein localises to the cytoplasm. It is found in the cytosol. It carries out the reaction 4 porphobilinogen + H2O = hydroxymethylbilane + 4 NH4(+). It participates in porphyrin-containing compound metabolism; protoporphyrin-IX biosynthesis; coproporphyrinogen-III from 5-aminolevulinate: step 2/4. Its function is as follows. As part of the heme biosynthetic pathway, catalyzes the sequential polymerization of four molecules of porphobilinogen to form hydroxymethylbilane, also known as preuroporphyrinogen. Catalysis begins with the assembly of the dipyrromethane cofactor by the apoenzyme from two molecules of porphobilinogen or from preuroporphyrinogen. The covalently linked cofactor acts as a primer, around which the tetrapyrrole product is assembled. In the last step of catalysis, the product, preuroporphyrinogen, is released, leaving the cofactor bound to the holodeaminase intact. This chain is Porphobilinogen deaminase (Hmbs), found in Rattus norvegicus (Rat).